The chain runs to 387 residues: Alkanesulfonate monooxygenase (387 aa).

It belongs to the SsuD family.

The enzyme catalyses an alkanesulfonate + FMNH2 + O2 = an aldehyde + FMN + sulfite + H2O + 2 H(+). In terms of biological role, catalyzes the desulfonation of aliphatic sulfonates. The protein is Alkanesulfonate monooxygenase of Cupriavidus pinatubonensis (strain JMP 134 / LMG 1197) (Cupriavidus necator (strain JMP 134)).